Reading from the N-terminus, the 308-residue chain is L-lactate dehydrogenase 2 (308 aa).

Residues Val13, Asp34, Arg39, Tyr64, and 78 to 79 (GV) each bind NAD(+). Arg87 is a binding site for substrate. Thr100 is a binding site for NAD(+). 119-122 (NPVD) lines the substrate pocket. Thr142 contributes to the NAD(+) binding site. A substrate-binding site is contributed by 147-150 (DSMR). His174 (proton acceptor) is an active-site residue. Thr224 is a substrate binding site.

Belongs to the LDH/MDH superfamily. LDH family. Homotetramer.

The protein localises to the cytoplasm. It catalyses the reaction (S)-lactate + NAD(+) = pyruvate + NADH + H(+). It participates in fermentation; pyruvate fermentation to lactate; (S)-lactate from pyruvate: step 1/1. In terms of biological role, catalyzes the conversion of lactate to pyruvate. The sequence is that of L-lactate dehydrogenase 2 from Lactobacillus acidophilus (strain ATCC 700396 / NCK56 / N2 / NCFM).